The chain runs to 1323 residues: Glutamate receptor ionotropic, NMDA 2D (1323 aa).

An N-terminal signal peptide occupies residues 1–27 (MRGAGGPRGPRGPAKMLLLLALACASP). The Extracellular segment spans residues 28-579 (FPEEVPGPGA…SPSAFLEPYS (552 aa)). N-linked (GlcNAc...) asparagine glycosylation occurs at Asn-89. A disulfide bridge connects residues Cys-101 and Cys-345. Asn-349, Asn-363, Asn-381, and Asn-464 each carry an N-linked (GlcNAc...) asparagine glycan. Intrachain disulfides connect Cys-452/Cys-480 and Cys-459/Cys-481. Residues Ser-536, Thr-538, and Arg-543 each contribute to the L-glutamate site. A glycan (N-linked (GlcNAc...) asparagine) is linked at Asn-566. Residues 580–601 (PAVWVMMFVMCLTVVAVTVFIF) form a helical membrane-spanning segment. Topologically, residues 602 to 626 (EYLSPVGYNRSLATGKRPGGSTFTI) are cytoplasmic. The segment at residues 627-638 (GKSIWLLWALVF) is an intramembrane region (discontinuously helical). The segment at 628–647 (KSIWLLWALVFNNSVPVENP) is pore-forming. Topologically, residues 639–650 (NNSVPVENPRGT) are cytoplasmic. The helical transmembrane segment at 651 to 671 (TSKIMVLVWAFFAVIFLASYT) threads the bilayer. At 672-840 (ANLAAFMIQE…EVMSSKLDID (169 aa)) the chain is on the extracellular side. Asn-712 carries N-linked (GlcNAc...) asparagine glycosylation. Residues Ser-714, Thr-715, and Asp-756 each coordinate L-glutamate. Residues Cys-770 and Cys-825 are joined by a disulfide bond. A helical transmembrane segment spans residues 841–864 (NMAGVFYMLLVAMGLSLLVFAWEH). Residues 865 to 1323 (LVYWRLRHCL…AHFSSLESEV (459 aa)) are Cytoplasmic-facing. 3 disordered regions span residues 897-952 (EAAP…PGGA), 977-1112 (AAPR…SLGG), and 1201-1323 (PWAA…ESEV). The segment covering 899–929 (APPPAKPPPPPQPLPSPAYPAARPPPGPAPF) has biased composition (pro residues). Positions 931 to 940 (PRERAAADRW) are enriched in basic and acidic residues. Residues 977 to 986 (AAPRGAAGRP) are compositionally biased toward low complexity. Positions 987-1001 (LSPPTTQPPQKPPPS) are enriched in pro residues. Residues 1030 to 1039 (AAAAAAVGPP) show a composition bias toward low complexity. A compositionally biased stretch (pro residues) spans 1080-1092 (TAPPPRRAAPPPC). Residues 1208 to 1228 (PRRRARCGCPRPHPHRPRASH) are compositionally biased toward basic residues. Arg-1303 carries the omega-N-methylarginine modification. At Ser-1313 the chain carries Phosphoserine. Residues 1321–1323 (SEV) carry the PDZ-binding motif.

Belongs to the glutamate-gated ion channel (TC 1.A.10.1) family. NR2D/GRIN2D subfamily. Heterotetramer. Forms heterotetrameric channels composed of two GluN1/zeta subunits (GRIN1), and two identical GluN2/epsilon subunits (GRIN2A, GRIN2B, GRIN2C or GRIN2D) or GluN3 subunits (GRIN3A or GRIN3B) (in vitro). In vivo, the subunit composition may depend on the expression levels of the different subunits. Interacts with PDZ domains of PATJ and DLG4. Detected in neonate brain synaptosomes (at protein level).

It localises to the cell membrane. It is found in the postsynaptic cell membrane. It carries out the reaction Ca(2+)(in) = Ca(2+)(out). It catalyses the reaction Na(+)(in) = Na(+)(out). The catalysed reaction is K(+)(in) = K(+)(out). Functionally, component of N-methyl-D-aspartate (NMDA) receptors (NMDARs) that function as heterotetrameric, ligand-gated cation channels with high calcium permeability and voltage-dependent block by Mg(2+). Participates in synaptic plasticity for learning and memory formation. Channel activation requires binding of the neurotransmitter L-glutamate to the GluN2 subunit, glycine or D-serine binding to the GluN1 subunit, plus membrane depolarization to eliminate channel inhibition by Mg(2+). NMDARs mediate simultaneously the potasium efflux and the influx of calcium and sodium. Each GluN2 subunit confers differential attributes to channel properties, including activation, deactivation and desensitization kinetics, pH sensitivity, Ca2(+) permeability, and binding to allosteric modulators. The protein is Glutamate receptor ionotropic, NMDA 2D of Mus musculus (Mouse).